Here is a 209-residue protein sequence, read N- to C-terminus: E3 ubiquitin-protein ligase RNF138 (209 aa).

The RING-type zinc finger occupies 18–58 (CPVCQEVLKTPVRTAACQHVFCRKCFLTAMRESGIHCPLCR). Residues cysteine 86, cysteine 89, histidine 101, and cysteine 105 each coordinate Zn(2+). Residues 86-105 (CRCCSKKIKFYRMRHHYKSC) form a C2HC RNF-type zinc finger. Residues 125–154 (QDSVRSSNRSETSASDNTETYQEDTSSSGH) are disordered. Threonine 142 is subject to Phosphothreonine. Residues 157–180 (FKCPLCQESNFTRQRLLDHCNSNH) form a C2H2-type zinc finger. The UIM domain maps to 189 to 207 (LQLDEETQYQTAVEESFQV).

Interacts with NLK. Interacts with XRCC5/Ku80. Interacts with RBBP8/CtIP. Post-translationally, auto-ubiquitinated.

The protein localises to the chromosome. It carries out the reaction S-ubiquitinyl-[E2 ubiquitin-conjugating enzyme]-L-cysteine + [acceptor protein]-L-lysine = [E2 ubiquitin-conjugating enzyme]-L-cysteine + N(6)-ubiquitinyl-[acceptor protein]-L-lysine.. It participates in protein modification; protein ubiquitination. Its function is as follows. E3 ubiquitin-protein ligase involved in DNA damage response by promoting DNA resection and homologous recombination. Recruited to sites of double-strand breaks following DNA damage and specifically promotes double-strand break repair via homologous recombination. Two different, non-exclusive, mechanisms have been proposed. According to a report, regulates the choice of double-strand break repair by favoring homologous recombination over non-homologous end joining (NHEJ): acts by mediating ubiquitination of XRCC5/Ku80, leading to remove the Ku complex from DNA breaks, thereby promoting homologous recombination. According to another report, cooperates with UBE2Ds E2 ubiquitin ligases (UBE2D1, UBE2D2, UBE2D3 or UBE2D4) to promote homologous recombination by mediating ubiquitination of RBBP8/CtIP. Together with NLK, involved in the ubiquitination and degradation of TCF/LEF. Also exhibits auto-ubiquitination activity in combination with UBE2K. May act as a negative regulator in the Wnt/beta-catenin-mediated signaling pathway. This chain is E3 ubiquitin-protein ligase RNF138, found in Rattus norvegicus (Rat).